Here is a 404-residue protein sequence, read N- to C-terminus: MKFPIYLDYAATTPVEFEVMKEMMNYLTLEGEFGNPASRSHKFGWKAEEAVDIARNQIAELIHADSREIIFTSGATESNNLAIKGIAEFYKKKGNHIITCSTEHKATLDTCRYLENKGFDITYLNPLQNGTINIYELQEKIQKNTILVSIMHVNNEIGVIQDIHKISKICQSNNILFHVDAAQSIGKININLKQLKIDLMSFSAHKIYGPKGIGGLYIRRKPRVRLSAQIHGGGHEKGMRSGTLPVHQIVGMGIAYKIAKIKINSDFNYIKHLRNRLWNGIKNIEEIHLNSNFENTVPHILNVSFNYVEGESLIMALKNLAVSSGSACTSSSLEASYVLRSLGLKDELAHSSIRFSLGRFTTKEEIDYTIQLIHQSINRLRNLSPLWEMFKSGVDMNNVNWTHN.

Residues 75–76 (AT), Asn-155, Gln-183, and 203–205 (SAH) each bind pyridoxal 5'-phosphate. Lys-206 bears the N6-(pyridoxal phosphate)lysine mark. Residue Thr-243 participates in pyridoxal 5'-phosphate binding. The active-site Cysteine persulfide intermediate is Cys-328. A [2Fe-2S] cluster-binding site is contributed by Cys-328.

Belongs to the class-V pyridoxal-phosphate-dependent aminotransferase family. NifS/IscS subfamily. As to quaternary structure, homodimer. Forms a heterotetramer with IscU, interacts with other sulfur acceptors. Pyridoxal 5'-phosphate serves as cofactor.

The protein resides in the cytoplasm. It catalyses the reaction (sulfur carrier)-H + L-cysteine = (sulfur carrier)-SH + L-alanine. It participates in cofactor biosynthesis; iron-sulfur cluster biosynthesis. In terms of biological role, master enzyme that delivers sulfur to a number of partners involved in Fe-S cluster assembly, tRNA modification or cofactor biosynthesis. Catalyzes the removal of elemental sulfur atoms from cysteine to produce alanine. Functions as a sulfur delivery protein for Fe-S cluster synthesis onto IscU, an Fe-S scaffold assembly protein, as well as other S acceptor proteins. This Buchnera aphidicola subsp. Baizongia pistaciae (strain Bp) protein is Cysteine desulfurase IscS.